Reading from the N-terminus, the 977-residue chain is Aspartate, glycine, lysine and serine-rich protein (977 aa).

Residues 23 to 116 (GVLPDVDSGF…PITNLGSSTS (94 aa)) are disordered. A compositionally biased stretch (basic and acidic residues) spans 37–50 (EETKSEPKQPDTKP). Over residues 51–63 (EQPSVSKPDSSVN) the composition is skewed to polar residues. Asn136 carries N-linked (GlcNAc...) asparagine glycosylation. Disordered stretches follow at residues 246 to 767 (AGGG…TSRG) and 780 to 922 (GGGK…GSGL). Positions 251 to 278 (YYSDSSDSSDSDSSGSDSSESGSSESGS) are enriched in low complexity. Positions 309–325 (NGSPDNGTPGSGSSRYT) are enriched in polar residues. The segment covering 410 to 427 (LEDELLGSDSSDEDDIDD) has biased composition (acidic residues). Gly residues predominate over residues 428–443 (GLGGLGLGAGPGGPGG). 2 stretches are compositionally biased toward basic residues: residues 447–457 (TPKHKPRTDKK) and 465–540 (KRKP…VQRK). Basic and acidic residues predominate over residues 541 to 557 (QPREYKQESPEVEREHS). Positions 572-583 (KILITSLTSSRG) are enriched in low complexity. The span at 591–643 (DGSGSGNGGGDDGNGGGAGNGGGAGNGGGAGNGGGAGNGGGNGGGGNGGGGND) shows a compositional bias: gly residues. A compositionally biased stretch (basic and acidic residues) spans 660–675 (EHRNRCEDDDDYREKC). Positions 700-724 (SGSSSSSSATESESSSTSTTPSTSS) are enriched in low complexity. Composition is skewed to polar residues over residues 730–744 (ILST…TRSG), 758–767 (SRPSVATSRG), and 785–801 (STGT…TSSA). Low complexity-rich tracts occupy residues 803–814 (GLDLSGLLGQLG), 822–857 (GPKP…GLLG), and 870–907 (KKPT…KLSP).

In terms of tissue distribution, component of the acid-insoluble and acid-soluble organic matrix of calcified layers of the shell (at protein level).

Its subcellular location is the secreted. This is Aspartate, glycine, lysine and serine-rich protein from Lottia gigantea (Giant owl limpet).